A 582-amino-acid chain; its full sequence is WD repeat-containing protein JIP5 (582 aa).

WD repeat units lie at residues 27–68 (KYPE…EAQS), 125–168 (RHKG…VLSK), 177–216 (DKND…SNQL), 265–310 (DQED…LMDQ), and 373–410 (GPAD…LNSD). Disordered regions lie at residues 405–496 (ETLN…DTEL) and 531–582 (TKEQ…FDDL). Acidic residues-rich tracts occupy residues 410–438 (DSDD…DDDV) and 447–485 (EVND…ENVT). 2 stretches are compositionally biased toward basic and acidic residues: residues 531–540 (TKEQSTKKAD) and 570–582 (QKHE…FDDL).

Belongs to the WD repeat WDR55 family.

Its subcellular location is the nucleus. The protein resides in the nucleolus. This Debaryomyces hansenii (strain ATCC 36239 / CBS 767 / BCRC 21394 / JCM 1990 / NBRC 0083 / IGC 2968) (Yeast) protein is WD repeat-containing protein JIP5 (JIP5).